A 331-amino-acid polypeptide reads, in one-letter code: Hydroxysteroid dehydrogenase-like protein 1 (331 aa).

The required for mitochondria translocation stretch occupies residues 2-82 (AAVDRFNLLY…TGSTDGIGKA (81 aa)). NADP(+) contacts are provided by residues 74–80 (GSTDGIG) and Asp125. Ser205 contributes to the substrate binding site. Tyr218 acts as the Proton acceptor in catalysis. Residue Lys222 participates in NADP(+) binding.

It belongs to the short-chain dehydrogenases/reductases (SDR) family. 17-beta-HSD 3 subfamily.

It localises to the mitochondrion. Functionally, may catalyze the metabolism of steroid hormones and thus play an important role in sex differentiation, the emergence and maintenance of the secondary sexual characters, and the regulation of endocrine. This chain is Hydroxysteroid dehydrogenase-like protein 1 (HSDL1), found in Gallus gallus (Chicken).